A 161-amino-acid polypeptide reads, in one-letter code: Ubiquitin-conjugating enzyme 15 (161 aa).

The UBC core domain occupies 15–161; that stretch reads IACNRLQKEL…TRWWFHDDKV (147 aa). Cys99 (glycyl thioester intermediate) is an active-site residue.

This sequence belongs to the ubiquitin-conjugating enzyme family.

The enzyme catalyses S-ubiquitinyl-[E1 ubiquitin-activating enzyme]-L-cysteine + [E2 ubiquitin-conjugating enzyme]-L-cysteine = [E1 ubiquitin-activating enzyme]-L-cysteine + S-ubiquitinyl-[E2 ubiquitin-conjugating enzyme]-L-cysteine.. The protein operates within protein modification; protein ubiquitination. Functionally, accepts the ubiquitin from the E1 complex and catalyzes its covalent attachment to other proteins. The protein is Ubiquitin-conjugating enzyme 15 (UBC15) of Arabidopsis thaliana (Mouse-ear cress).